The sequence spans 247 residues: Chymase (247 aa).

Positions methionine 1–alanine 19 are cleaved as a signal peptide. Residues glycine 20–glutamate 21 constitute a propeptide, activation peptide. Positions isoleucine 22–arginine 245 constitute a Peptidase S1 domain. Residues cysteine 51 and cysteine 67 are joined by a disulfide bond. Histidine 66 functions as the Charge relay system in the catalytic mechanism. The N-linked (GlcNAc...) asparagine glycan is linked to asparagine 80. Catalysis depends on aspartate 110, which acts as the Charge relay system. Disulfide bonds link cysteine 144–cysteine 209 and cysteine 175–cysteine 188. The active-site Charge relay system is the serine 203.

Belongs to the peptidase S1 family. Granzyme subfamily. In terms of tissue distribution, mast cells.

The protein resides in the secreted. It is found in the cytoplasmic granule. It carries out the reaction Preferential cleavage: Phe-|-Xaa &gt; Tyr-|-Xaa &gt; Trp-|-Xaa &gt; Leu-|-Xaa.. Major secreted protease of mast cells with suspected roles in vasoactive peptide generation, extracellular matrix degradation, and regulation of gland secretion. This chain is Chymase (Cma1), found in Mus musculus (Mouse).